A 38-amino-acid chain; its full sequence is NAD-reducing hydrogenase HoxS subunit beta (38 aa).

It belongs to the [NiFe]/[NiFeSe] hydrogenase large subunit family. Tetramer of an alpha and a gamma subunits (flavin-containing dimer), and a delta and a nickel-containing beta subunits (hydrogenase dimer). Requires FMN as cofactor. The cofactor is Ni(2+).

It is found in the cytoplasm. It carries out the reaction H2 + NAD(+) = NADH + H(+). The protein is NAD-reducing hydrogenase HoxS subunit beta (hoxH) of Rhodococcus opacus (Nocardia opaca).